The chain runs to 85 residues: MAHKKAGGSTNNGRDSESKRLGVKRFGGESVLAGNIIVRQRGTKFHAGTNVGLGKDHTLFALTDGKVKFEVKGPKNRKFVTIEAA.

The disordered stretch occupies residues 1-22 (MAHKKAGGSTNNGRDSESKRLG).

This sequence belongs to the bacterial ribosomal protein bL27 family.

The protein is Large ribosomal subunit protein bL27 of Photobacterium profundum (strain SS9).